A 550-amino-acid chain; its full sequence is Centrosomal and chromosomal factor (550 aa).

3 coiled-coil regions span residues 20 to 44, 105 to 126, and 239 to 274; these read SALS…QQHH, VANS…QQQQ, and ATSA…QQAH. 4 disordered regions span residues 21-145, 208-320, 361-380, and 392-465; these read ALSA…KDYS, LSSG…HAAN, SHYA…RDAM, and SGKL…SASV. Composition is skewed to low complexity over residues 24–71, 81–136, and 221–320; these read ALQQ…QQQQ, ANTS…NAAP, and AAVA…HAAN. Composition is skewed to low complexity over residues 396 to 412 and 450 to 462; these read QQSQ…QQHC and SATP…SGGS.

Homodimer. Interacts with esc, Trl, E(z), scm and ph-p in vitro. Found in vivo in an esc-containing complex, which may be the Esc/E(z) complex. Also found in vivo in a Pc-containing complex that may be the PRC1 complex, but does not interact with Pc directly. Interacts with cyclin CycG.

It localises to the nucleus. The protein localises to the cytoplasm. The protein resides in the cytoskeleton. Its subcellular location is the microtubule organizing center. It is found in the centrosome. It localises to the chromosome. Its function is as follows. Essential protein required for proper condensation of mitotic chromosomes and progression through mitosis. Binds to specific polytene chromosome sites, many of which are shared with the posterior sex combs (Psc) protein. Involved in maintaining Abd-B repression outside its normal expression domain. In Drosophila melanogaster (Fruit fly), this protein is Centrosomal and chromosomal factor (corto).